Here is a 312-residue protein sequence, read N- to C-terminus: Small ribosomal subunit biogenesis GTPase RsgA (312 aa).

The CP-type G domain occupies 86-245 (QSFLKRPAVA…LADTPGFNRP (160 aa)). GTP is bound by residues 135–138 (TKID) and 187–195 (GPSGVGKTS). Residues Cys-270, Cys-275, His-277, and Cys-283 each coordinate Zn(2+).

The protein belongs to the TRAFAC class YlqF/YawG GTPase family. RsgA subfamily. As to quaternary structure, monomer. Associates with 30S ribosomal subunit, binds 16S rRNA. Zn(2+) serves as cofactor.

It is found in the cytoplasm. In terms of biological role, one of several proteins that assist in the late maturation steps of the functional core of the 30S ribosomal subunit. Helps release RbfA from mature subunits. May play a role in the assembly of ribosomal proteins into the subunit. Circularly permuted GTPase that catalyzes slow GTP hydrolysis, GTPase activity is stimulated by the 30S ribosomal subunit. In Prochlorococcus marinus (strain NATL1A), this protein is Small ribosomal subunit biogenesis GTPase RsgA.